We begin with the raw amino-acid sequence, 251 residues long: Proteasome subunit alpha type-4-like (251 aa).

The protein belongs to the peptidase T1A family. As to quaternary structure, the 26S proteasome consists of a 20S proteasome core and two 19S regulatory subunits. The 20S proteasome core is composed of 28 subunits that are arranged in four stacked rings, resulting in a barrel-shaped structure. The two end rings are each formed by seven alpha subunits, and the two central rings are each formed by seven beta subunits. The catalytic chamber with the active sites is on the inside of the barrel. In terms of tissue distribution, testis, prominent after meiosis II. After meiosis, predominantly localized to the haploid spermatid nuclei of the 64-cell cysts, remaining during the elongation and condensation of the spermatid nuclei. In mature, motile sperm, expression is seen exclusively in the sperm head.

Its subcellular location is the nucleus. The proteasome is a multicatalytic proteinase complex which is characterized by its ability to cleave peptides with Arg, Phe, Tyr, Leu, and Glu adjacent to the leaving group at neutral or slightly basic pH. The proteasome has an ATP-dependent proteolytic activity. The protein is Proteasome subunit alpha type-4-like (Prosalpha3T) of Drosophila melanogaster (Fruit fly).